Consider the following 369-residue polypeptide: O-methyltransferase 12 (369 aa).

Residues G181, D204, 229–231, D230, F231, and K244 contribute to the S-adenosyl-L-methionine site; that span reads GDF. Catalysis depends on H248, which acts as the Proton acceptor.

The protein belongs to the class I-like SAM-binding methyltransferase superfamily. Cation-independent O-methyltransferase family. COMT subfamily.

It catalyses the reaction resorcinol + S-adenosyl-L-methionine = 3-methoxyphenol + S-adenosyl-L-homocysteine + H(+). Its function is as follows. S-adenosyl-L-methionine dependent O-methyltransferase that may be involved in modifying resorcinol ring to synthesize a variant of 4-methyl-5-pentylbenzene-1,3-diol. This chain is O-methyltransferase 12 (omt12), found in Dictyostelium discoideum (Social amoeba).